We begin with the raw amino-acid sequence, 256 residues long: MWLLLTLSFLLASTAAQDGDKLLEGDECAPHSQPWQVALYERGRFNCGASLISPHWVLSAAHCQSRFMRVRLGEHNLRKRDGPEQLRTTSRVIPHPRYEARSHRNDIMLLRLVQPARLNPQVRPAVLPTRCPHPGEACVVSGWGLVSHNEPGTAGSPRSQVSLPDTLHCANISIISDTSCDKSYPGRLTNTMVCAGAEGRGAESCEGDSGGPLVCGGILQGIVSWGDVPCDNTTKPGVYTKVCHYLEWIRETMKRN.

An N-terminal signal peptide occupies residues methionine 1 to alanine 16. The propeptide at glutamine 17–lysine 21 is activation peptide. A Peptidase S1 domain is found at leucine 22 to lysine 254. Residues cysteine 47 and cysteine 63 are joined by a disulfide bond. Active-site charge relay system residues include histidine 62 and aspartate 106. Intrachain disulfides connect cysteine 138–cysteine 215, cysteine 180–cysteine 194, and cysteine 205–cysteine 230. A glycan (N-linked (GlcNAc...) asparagine) is linked at asparagine 171. The Charge relay system role is filled by serine 209. Asparagine 232 carries an N-linked (GlcNAc...) asparagine glycan.

This sequence belongs to the peptidase S1 family. Kallikrein subfamily. Highest expression in the thyroid gland. Also expressed in the prostate, salivary, and adrenal glands and in the colon testis and kidney.

Its subcellular location is the secreted. In terms of biological role, protease whose physiological substrate is not yet known. The sequence is that of Kallikrein-15 (KLK15) from Homo sapiens (Human).